The chain runs to 890 residues: Alanine--tRNA ligase (890 aa).

4 residues coordinate Zn(2+): histidine 568, histidine 572, cysteine 680, and histidine 684.

It belongs to the class-II aminoacyl-tRNA synthetase family. It depends on Zn(2+) as a cofactor.

The protein resides in the cytoplasm. The enzyme catalyses tRNA(Ala) + L-alanine + ATP = L-alanyl-tRNA(Ala) + AMP + diphosphate. Its function is as follows. Catalyzes the attachment of alanine to tRNA(Ala) in a two-step reaction: alanine is first activated by ATP to form Ala-AMP and then transferred to the acceptor end of tRNA(Ala). Also edits incorrectly charged Ser-tRNA(Ala) and Gly-tRNA(Ala) via its editing domain. The sequence is that of Alanine--tRNA ligase from Psychrobacter arcticus (strain DSM 17307 / VKM B-2377 / 273-4).